The sequence spans 274 residues: NH(3)-dependent NAD(+) synthetase (274 aa).

46–53 is a binding site for ATP; the sequence is GISGGQDS. Residue D52 coordinates Mg(2+). R140 is a deamido-NAD(+) binding site. Position 160 (T160) interacts with ATP. Residue E165 participates in Mg(2+) binding. The deamido-NAD(+) site is built by K173 and D180. Residues K189 and T211 each coordinate ATP. 260–261 provides a ligand contact to deamido-NAD(+); the sequence is HK.

Belongs to the NAD synthetase family. Homodimer.

It carries out the reaction deamido-NAD(+) + NH4(+) + ATP = AMP + diphosphate + NAD(+) + H(+). It participates in cofactor biosynthesis; NAD(+) biosynthesis; NAD(+) from deamido-NAD(+) (ammonia route): step 1/1. In terms of biological role, catalyzes the ATP-dependent amidation of deamido-NAD to form NAD. Uses ammonia as a nitrogen source. The polypeptide is NH(3)-dependent NAD(+) synthetase (Streptococcus pyogenes serotype M2 (strain MGAS10270)).